Here is a 169-residue protein sequence, read N- to C-terminus: Non-specific lipid transfer protein GPI-anchored 11 (169 aa).

The N-terminal stretch at 1–23 (MAYATILMIFSVVALMSGERAHA) is a signal peptide. 4 disulfides stabilise this stretch: Cys-27–Cys-70, Cys-37–Cys-54, Cys-55–Cys-95, and Cys-68–Cys-105. Residue Ser-146 is the site of GPI-anchor amidated serine attachment. A propeptide spans 147–169 (SDASLLSVSFAFVIFMALISSFY) (removed in mature form).

The protein belongs to the plant LTP family. Expressed in a vascular-specific manner, mainly in roots, and, to a lower extent, in hypocotyls, seedlings stems and flowers.

The protein resides in the cell membrane. Its subcellular location is the secreted. Probable lipid transfer protein. Proteoglycan-like factor that exhibits xylogen activity consisting in mediating local and inductive cell-cell interactions required for xylem differentiation. The polypeptide is Non-specific lipid transfer protein GPI-anchored 11 (Arabidopsis thaliana (Mouse-ear cress)).